The chain runs to 108 residues: UPF0060 membrane protein Sputw3181_1172 (108 aa).

4 consecutive transmembrane segments (helical) span residues 3–23, 31–51, 63–83, and 87–107; these read VITTLGLFIITAIAEIVGCYL, GASAWVLLPAAISLALFAWLL, AAYGGVYVTIAIVWLWGVDGI, and RWDLAGVVLMLAGMAVIMFAP.

The protein belongs to the UPF0060 family.

The protein resides in the cell inner membrane. The sequence is that of UPF0060 membrane protein Sputw3181_1172 from Shewanella sp. (strain W3-18-1).